Reading from the N-terminus, the 2200-residue chain is Non-reducing polyketide synthase tpeB (2200 aa).

Residues 16–255 form the Starter acyltransferase (SAT) domain; that stretch reads FFGDQTVDTL…MDLPLGTPAH (240 aa). The Ketosynthase family 3 (KS3) domain maps to 382–815; it reads SNMIAIVGQS…GGNNCVLLEE (434 aa). Active-site for beta-ketoacyl synthase activity residues include C554, H690, and H729. The Malonyl-CoA:ACP transacylase (MAT) domain maps to 914–1202; the sequence is VFAFTGQGSQ…VLNSFIKATL (289 aa). The tract at residues 1296-1621 is product template (PT) domain; the sequence is TASLQRVREE…TKRILTTILG (326 aa). Residues 1300-1433 form an N-terminal hotdog fold region; that stretch reads QRVREERIQG…CKIRFESKAD (134 aa). Residues 1300-1617 enclose the PKS/mFAS DH domain; that stretch reads QRVREERIQG…FQRLTKRILT (318 aa). The Proton acceptor; for dehydratase activity role is filled by H1332. Positions 1462 to 1617 are C-terminal hotdog fold; sequence NGHKLPKPVV…FQRLTKRILT (156 aa). D1522 (proton donor; for dehydratase activity) is an active-site residue. The disordered stretch occupies residues 1625–1652; sequence DHHNSNEVRNGNATTTHTNPPAHATTQS. The span at 1636 to 1650 shows a compositional bias: low complexity; that stretch reads NATTTHTNPPAHATT. Carrier domains are found at residues 1671 to 1748 and 1791 to 1865; these read TVGE…AELP and ANYA…GPNT. O-(pantetheine 4'-phosphoryl)serine occurs at positions 1708 and 1825. The interval 1931–2173 is thioesterase (TE) domain; that stretch reads MFFLPDGTGY…TVPCDHLSIM (243 aa).

It depends on pantetheine 4'-phosphate as a cofactor.

Its pathway is secondary metabolite biosynthesis. In terms of biological role, non-reducing polyketide synthase; part of the gene cluster that mediates the biosynthesis of polyesters containing 2,4-dihydroxy-6-(2-hydroxypropyl)benzoate and 3-hydroxybutyrate moieties, such as talapolyester G, 15G256beta and 15G256beta-2; as well as to oxidized derivatives such as 15G256alpha. The biosynthesis of the polyesters probably starts with the formation of the diketide 3-hydroxybutyryl-S-ACP catalyzed by the partially reducing polyketide synthase tpeA. The acceptance of 3-hydroxybutyryl by the non-reducing polyketide synthase tpeB would initiate further elongation and cyclization, catalyzed by KS and PT, respectively, to form 2,4-dihydroxy-6-(2-hydroxyn-propyl)benzoyl-S-ACP intermediate. The TE domain could catalyze lactonization at this step to yield 6-hydroxymellein as a derailment product. The polyesterification process maybe occurs when additional molecules of 3-hydroxybutyryl are transferred to tpeB. Following the first esterification step, an intramolecular cyclization catalyzed by the TE domain of tpeB would give talarodioxadione 1, whereas the ethyl esterification of talapolyester G perhaps happens spontaneously. Further oxidation by the cytochrome P450 monooxygenase tpeC then leads to the formation of oxidized derivatives. The chain is Non-reducing polyketide synthase tpeB from Talaromyces stipitatus (strain ATCC 10500 / CBS 375.48 / QM 6759 / NRRL 1006) (Penicillium stipitatum).